Here is a 1174-residue protein sequence, read N- to C-terminus: HEAT repeat-containing protein 6 (1174 aa).

The stretch at 168–207 (NELLGPTGILVNLCDPSQPDPELWREAIHCMANLCLGVPG) is one HEAT 1 repeat. Disordered regions lie at residues 304–346 (GRSP…EELK) and 373–392 (LGPQ…KDHF). Residues 323-335 (SKKKRKAGKQKKG) are compositionally biased toward basic residues. The segment covering 336 to 346 (HQGEESKEELK) has biased composition (basic and acidic residues). HEAT repeat units follow at residues 460–498 (GIGS…GSKQ), 523–560 (SIRE…NAPY), and 566–603 (GLLT…AQVS). The tract at residues 619 to 648 (SQNSGSATPSDPESNRKESMLEGGKKNGLH) is disordered. Over residues 631–648 (ESNRKESMLEGGKKNGLH) the composition is skewed to basic and acidic residues.

In Xenopus laevis (African clawed frog), this protein is HEAT repeat-containing protein 6 (heatr6).